Here is a 230-residue protein sequence, read N- to C-terminus: uncharacterized protein (230 aa).

The N-terminal stretch at 1–18 (MRQYTSKSILFMTAIALS) is a signal peptide.

This is an uncharacterized protein from Pasteurella multocida (strain Pm70).